Consider the following 294-residue polypeptide: Small ribosomal subunit protein uS2 (294 aa).

This sequence belongs to the universal ribosomal protein uS2 family.

The polypeptide is Small ribosomal subunit protein uS2 (rpsB) (Mycoplasma pneumoniae (strain ATCC 29342 / M129 / Subtype 1) (Mycoplasmoides pneumoniae)).